The following is a 558-amino-acid chain: Dihydroxy-acid dehydratase (558 aa).

Position 81 (Asp81) interacts with Mg(2+). Cys122 lines the [2Fe-2S] cluster pocket. Mg(2+) contacts are provided by Asp123 and Lys124. Position 124 is an N6-carboxylysine (Lys124). Cys195 provides a ligand contact to [2Fe-2S] cluster. Glu447 contacts Mg(2+). Ser473 (proton acceptor) is an active-site residue.

This sequence belongs to the IlvD/Edd family. As to quaternary structure, homodimer. [2Fe-2S] cluster is required as a cofactor. Requires Mg(2+) as cofactor.

The enzyme catalyses (2R)-2,3-dihydroxy-3-methylbutanoate = 3-methyl-2-oxobutanoate + H2O. It carries out the reaction (2R,3R)-2,3-dihydroxy-3-methylpentanoate = (S)-3-methyl-2-oxopentanoate + H2O. The protein operates within amino-acid biosynthesis; L-isoleucine biosynthesis; L-isoleucine from 2-oxobutanoate: step 3/4. It functions in the pathway amino-acid biosynthesis; L-valine biosynthesis; L-valine from pyruvate: step 3/4. Functionally, functions in the biosynthesis of branched-chain amino acids. Catalyzes the dehydration of (2R,3R)-2,3-dihydroxy-3-methylpentanoate (2,3-dihydroxy-3-methylvalerate) into 2-oxo-3-methylpentanoate (2-oxo-3-methylvalerate) and of (2R)-2,3-dihydroxy-3-methylbutanoate (2,3-dihydroxyisovalerate) into 2-oxo-3-methylbutanoate (2-oxoisovalerate), the penultimate precursor to L-isoleucine and L-valine, respectively. The sequence is that of Dihydroxy-acid dehydratase from Bacillus velezensis (strain DSM 23117 / BGSC 10A6 / LMG 26770 / FZB42) (Bacillus amyloliquefaciens subsp. plantarum).